We begin with the raw amino-acid sequence, 886 residues long: Interference hedgehog (886 aa).

The N-terminal stretch at 1–20 (MTLLTSSLLLFSLLTSRLEA) is a signal peptide. Topologically, residues 21 to 709 (IPVLEKSPAH…ETFNMSPMLT (689 aa)) are extracellular. Residues 29–38 (AHPAHSAHPA) show a composition bias toward low complexity. The tract at residues 29–52 (AHPAHSAHPAHPAHPAHPAHPSPG) is disordered. Ig-like C2-type domains follow at residues 51 to 148 (PGVR…IARL), 138 to 238 (PLVV…ERIQ), 258 to 346 (PHLL…YIKV), and 352 to 438 (PQIV…LQVN). 4 cysteine pairs are disulfide-bonded: Cys74–Cys132, Cys179–Cys226, Cys282–Cys330, and Cys373–Cys420. 2 N-linked (GlcNAc...) asparagine glycosylation sites follow: Asn108 and Asn215. The tract at residues 432 to 475 (GTLLQVNPKQIQEPRESGGTHRPKPNQGSRQKQMYPPTPPNVTR) is disordered. 2 Fibronectin type-III domains span residues 467-573 (PPTP…LQPG) and 581-676 (VPEL…TQRP). Asn472 carries N-linked (GlcNAc...) asparagine glycosylation. Heparin is bound by residues Arg503, Lys507, Lys509, and Arg547. A glycan (N-linked (GlcNAc...) asparagine) is linked at Asn563. The interval 668 to 697 (LKQGRTQRPKTSTTEEPTLQMGDRDTTTPS) is disordered. Residues 671–684 (GRTQRPKTSTTEEP) are compositionally biased toward polar residues. A glycan (N-linked (GlcNAc...) asparagine) is linked at Asn699. A helical membrane pass occupies residues 710–730 (GTIGGGAVLILLLISTCFCVC). The Cytoplasmic segment spans residues 731–886 (RRRNSRSRGN…SSGSLNSVGV (156 aa)). Disordered stretches follow at residues 734–768 (NSRS…QRQR) and 781–886 (QQQQ…SVGV). Low complexity-rich tracts occupy residues 829 to 843 (RAGG…NNNN) and 870 to 886 (SSRS…SVGV).

This sequence belongs to the immunoglobulin superfamily. IHOG family. Homodimer. Heterotetramer; 2 iHog chains bind 2 hh chains when facilitated by heparin, heparin is required to promote high-affinity interactions between hh and iHog.

It localises to the membrane. In terms of biological role, mediates response to the active Hedgehog (Hh) protein signal in embryos, functioning upstream or at the level of patched (ptc). The polypeptide is Interference hedgehog (ihog) (Drosophila melanogaster (Fruit fly)).